Here is a 425-residue protein sequence, read N- to C-terminus: Enolase (425 aa).

Gln162 provides a ligand contact to (2R)-2-phosphoglycerate. Glu204 (proton donor) is an active-site residue. Mg(2+) contacts are provided by Asp241, Glu288, and Asp315. 4 residues coordinate (2R)-2-phosphoglycerate: Lys340, Arg369, Ser370, and Lys391. Residue Lys340 is the Proton acceptor of the active site.

Belongs to the enolase family. Requires Mg(2+) as cofactor.

The protein resides in the cytoplasm. The protein localises to the secreted. It is found in the cell surface. The catalysed reaction is (2R)-2-phosphoglycerate = phosphoenolpyruvate + H2O. Its pathway is carbohydrate degradation; glycolysis; pyruvate from D-glyceraldehyde 3-phosphate: step 4/5. Catalyzes the reversible conversion of 2-phosphoglycerate (2-PG) into phosphoenolpyruvate (PEP). It is essential for the degradation of carbohydrates via glycolysis. This Porphyromonas gingivalis (strain ATCC 33277 / DSM 20709 / CIP 103683 / JCM 12257 / NCTC 11834 / 2561) protein is Enolase.